Reading from the N-terminus, the 369-residue chain is MRVLGFMTGTSLDAVDMAVLETDGEGISAFGPAGERKLTDATREILLEATEAALKWERGEPEPQIFAKAAVTVAEEHFAAAEAFLAEHGLVWSEFDLLGMHGQTVLHERPQDGVPGRTVQLGDAGLLASLTGRPVAHDFRSADVAAGGEGAPLAPIYHLARARASGLEPPLAVLNVGGVANVTFWSGPGDFAAFDTGPGNGMIDLLVQARKAGRYDAGGRYASVGRVDEAVVRALLAHPYFEAPAPKSLDRYDFSLEPLEPLQLEDACATLVAFTAEAVGRGFELMGEVPREVVVTGGGRHNPEIMKALAARLPAPVKTAEDHGWRGDSIEAEAFAYLAARCARGQPISFPKTTGVARPMTGGRIVQPE.

9-16 (GTSLDAVD) is an ATP binding site.

Belongs to the anhydro-N-acetylmuramic acid kinase family.

The enzyme catalyses 1,6-anhydro-N-acetyl-beta-muramate + ATP + H2O = N-acetyl-D-muramate 6-phosphate + ADP + H(+). It participates in amino-sugar metabolism; 1,6-anhydro-N-acetylmuramate degradation. The protein operates within cell wall biogenesis; peptidoglycan recycling. Catalyzes the specific phosphorylation of 1,6-anhydro-N-acetylmuramic acid (anhMurNAc) with the simultaneous cleavage of the 1,6-anhydro ring, generating MurNAc-6-P. Is required for the utilization of anhMurNAc either imported from the medium or derived from its own cell wall murein, and thus plays a role in cell wall recycling. In Phenylobacterium zucineum (strain HLK1), this protein is Anhydro-N-acetylmuramic acid kinase.